The chain runs to 491 residues: Probable cobyric acid synthase (491 aa).

The 193-residue stretch at 252 to 444 (PVEVNIVKFS…LHGILENFEF (193 aa)) folds into the GATase cobBQ-type domain. Cys330 acts as the Nucleophile in catalysis. His436 is an active-site residue.

Belongs to the CobB/CobQ family. CobQ subfamily.

It functions in the pathway cofactor biosynthesis; adenosylcobalamin biosynthesis. Its function is as follows. Catalyzes amidations at positions B, D, E, and G on adenosylcobyrinic A,C-diamide. NH(2) groups are provided by glutamine, and one molecule of ATP is hydrogenolyzed for each amidation. The sequence is that of Probable cobyric acid synthase from Methanococcus vannielii (strain ATCC 35089 / DSM 1224 / JCM 13029 / OCM 148 / SB).